A 339-amino-acid polypeptide reads, in one-letter code: MVREEVAVSTRTLQWKCVESRTDSKRLSYGRFILSPLMKGQADMIGIAMRRALLGEIEGTCITRAKSDKIPHEYSTIVGIEESVHQILMNLKEIVLRSNLYGTCDASIFVRGPRCVTAQDIISPPSVKMVDTTQHIASLTEPIDLCIGLQIERDRGYRMKTPNNDQDGSYPIPIEAVSMPVRNANHSIHSYGNGNEKQEILFLEIWTNGSLTPKEALHEASHNLIDLFIPFLHGEEEDINLEDSLNRGTLPFFTFQDKLANLRKNKKAIALECIFIDQSELPPRTYNCLKRSNIHTLLDLLSNSQEDLMRIEHLRIEDVKRILDILQKHFTIDLPKNKF.

The tract at residues 1-235 is alpha N-terminal domain (alpha-NTD); it reads MVREEVAVST…DLFIPFLHGE (235 aa). The alpha C-terminal domain (alpha-CTD) stretch occupies residues 267-339; it reads KAIALECIFI…FTIDLPKNKF (73 aa).

It belongs to the RNA polymerase alpha chain family. In plastids the minimal PEP RNA polymerase catalytic core is composed of four subunits: alpha, beta, beta', and beta''. When a (nuclear-encoded) sigma factor is associated with the core the holoenzyme is formed, which can initiate transcription.

It is found in the plastid. Its subcellular location is the chloroplast. It carries out the reaction RNA(n) + a ribonucleoside 5'-triphosphate = RNA(n+1) + diphosphate. In terms of biological role, DNA-dependent RNA polymerase catalyzes the transcription of DNA into RNA using the four ribonucleoside triphosphates as substrates. The polypeptide is DNA-directed RNA polymerase subunit alpha (Drimys granadensis).